Here is a 500-residue protein sequence, read N- to C-terminus: Tektin-like protein 1 (500 aa).

A coiled-coil region spans residues 198-229 (MLTWEKEELKSMKRKMEADMEKSEALLKTLAS). Tyr372 carries the phosphotyrosine modification. A coiled-coil region spans residues 420–444 (DKLQRHISHVEKNLDELLSMRKKLT).

Microtubule inner protein component of sperm flagellar doublet microtubules.

It is found in the cytoplasm. Its subcellular location is the cytoskeleton. The protein resides in the flagellum axoneme. In terms of biological role, microtubule inner protein (MIP) part of the dynein-decorated doublet microtubules (DMTs) in sperm flagellar axoneme, which is required for motile flagellum beating. Forms an extensive interaction network cross-linking the lumen of axonemal doublet microtubules. The protein is Tektin-like protein 1 of Bos taurus (Bovine).